Consider the following 486-residue polypeptide: GTPase Obg (486 aa).

The Obg domain maps to 2–159 (SRFIDRVVLH…RELVLELKSV (158 aa)). One can recognise an OBG-type G domain in the interval 160–340 (ADVGLVGFPS…LTFALAKLVA (181 aa)). Residues 166 to 173 (GFPSAGKS), 191 to 195 (FTTLV), 212 to 215 (DVPG), 292 to 295 (NKAD), and 321 to 323 (SAV) contribute to the GTP site. 2 residues coordinate Mg(2+): Ser173 and Thr193. Residues 358-438 (PVISNENSFS…IGNVSFDWEP (81 aa)) enclose the OCT domain. The tract at residues 462 to 486 (RIGATERKHASRIRRGLEGLDPEDQ) is disordered.

The protein belongs to the TRAFAC class OBG-HflX-like GTPase superfamily. OBG GTPase family. As to quaternary structure, monomer. Requires Mg(2+) as cofactor.

It localises to the cytoplasm. Functionally, an essential GTPase which binds GTP, GDP and possibly (p)ppGpp with moderate affinity, with high nucleotide exchange rates and a fairly low GTP hydrolysis rate. Plays a role in control of the cell cycle, stress response, ribosome biogenesis and in those bacteria that undergo differentiation, in morphogenesis control. This chain is GTPase Obg, found in Rhodococcus jostii (strain RHA1).